The sequence spans 243 residues: Small ribosomal subunit protein uS2c (243 aa).

This sequence belongs to the universal ribosomal protein uS2 family.

Its subcellular location is the plastid. The protein resides in the chloroplast. The polypeptide is Small ribosomal subunit protein uS2c (rps2) (Cyanidium caldarium (Red alga)).